Here is a 615-residue protein sequence, read N- to C-terminus: Zinc metalloproteinase-disintegrin-like (615 aa).

The signal sequence occupies residues 1–20; the sequence is MIQALLVTICLVGFPHQGSS. Positions 21–195 are excised as a propeptide; it reads IILESGNVKD…KMNFQSANNP (175 aa). The region spanning 204–400 is the Peptidase M12B domain; the sequence is KYIKLAVVVD…DLPQCILNKP (197 aa). Cystine bridges form between C315–C395, C355–C379, and C357–C362. Zn(2+) is bound at residue H340. E341 is a catalytic residue. Residues H344 and H350 each coordinate Zn(2+). The Disintegrin domain maps to 408–494; sequence PAVCGNNFVE…DCPMDGLQRN (87 aa). Ca(2+) contacts are provided by V410, N413, F415, E417, and D423. Intrachain disulfides connect C411–C440, C422–C435, C424–C430, C434–C457, C448–C454, C453–C479, C466–C486, C473–C505, C498–C510, C517–C567, C532–C576, C545–C555, C562–C602, and C596–C608. The D/ECD-tripeptide motif lies at 472 to 474; that stretch reads DCD.

Belongs to the venom metalloproteinase (M12B) family. P-III subfamily. P-IIIa sub-subfamily. In terms of assembly, monomer. Requires Zn(2+) as cofactor. Expressed by the venom gland.

It is found in the secreted. In terms of biological role, snake venom zinc metalloprotease that may induce platelet aggregation. The chain is Zinc metalloproteinase-disintegrin-like from Cerberus rynchops (Dog-faced water snake).